A 282-amino-acid polypeptide reads, in one-letter code: Predicted GPI-anchored protein 23 (282 aa).

The N-terminal stretch at 1–18 is a signal peptide; that stretch reads MRVSTLVLSTSIIPIATA. The tract at residues 163–264 is disordered; sequence GQETSGAGSL…SSNSSSSAGM (102 aa). Residues asparagine 180, asparagine 192, and asparagine 257 are each glycosylated (N-linked (GlcNAc...) asparagine). A compositionally biased stretch (gly residues) spans 186-216; it reads GGSGSSNGTSSGSGSGSGAGVGSGSGSGSGS. Residues 236 to 264 show a composition bias toward low complexity; the sequence is LGISSSISQSTTRQLQTSGSSNSSSSAGM. Serine 259 is lipidated: GPI-anchor amidated serine. Positions 260–282 are cleaved as a propeptide — removed in mature form; that stretch reads SSAGMGNVVVGMNAVALAALVLI.

It is found in the cell membrane. Functionally, probable cell surface protein involved in the process of adhesion and early events of invasion. This chain is Predicted GPI-anchored protein 23 (PGA23), found in Candida albicans (strain SC5314 / ATCC MYA-2876) (Yeast).